The primary structure comprises 68 residues: Alpha-conotoxin Lp1.4 (68 aa).

The N-terminal stretch at 1 to 21 is a signal peptide; it reads MGMRMMSIMFMLVVLATTVVS. Positions 22–48 are excised as a propeptide; sequence FTSDRALDAMNAAASKKASRLIALAVR. Disulfide bonds link Cys-50–Cys-56 and Cys-51–Cys-64. The interval 52 to 54 is ser-Xaa-Pro motif, crucial for potent interaction with nAChR; the sequence is SHP. Asp-65 bears the Aspartic acid 1-amide mark.

The protein belongs to the conotoxin A superfamily. As to expression, expressed by the venom duct.

It localises to the secreted. Functionally, alpha-conotoxins act on postsynaptic membranes, they bind to the nicotinic acetylcholine receptors (nAChR) and thus inhibit them. This toxin inhibits mouse muscle alpha-1-beta-1-gamma-delta (CHRNA1-CHRNB1-CHRNG-CHRND), and weakly rat neuronal alpha-6/alpha-3-beta-2 (CHRNA6/CHRNA3-CHRNB2). This is Alpha-conotoxin Lp1.4 from Conus leopardus (Leopard cone).